Reading from the N-terminus, the 102-residue chain is EPIDERMAL PATTERNING FACTOR-like protein 9 (102 aa).

Positions 1–31 (MKHEMMNIKPRCITIFFLLFALLLGNYVVQA) are cleaved as a signal peptide. Disulfide bonds link cysteine 65-cysteine 98, cysteine 70-cysteine 77, and cysteine 73-cysteine 100.

The protein belongs to the plant cysteine rich small secretory peptide family. Epidermal patterning factor subfamily. Interacts with ERECTA and TMM. In terms of tissue distribution, expressed in immature organs, including leaves, stems and flower buds, but not in roots, shoot apical meristem and petals. Detected in the mesophyll tissues but not in the epidermal tissues where stomata develop.

The protein localises to the secreted. The protein resides in the extracellular space. It localises to the apoplast. Its function is as follows. Positively regulates stomatal density and patterning. Acts by competing with EPF2 (AC Q8LC53) for the same receptors, ERECTA (AC Q42371) and TMM (AC Q9SSD1). Not cleaved by the protease CRSP (AC Q9LNU1). The sequence is that of EPIDERMAL PATTERNING FACTOR-like protein 9 from Arabidopsis thaliana (Mouse-ear cress).